Reading from the N-terminus, the 276-residue chain is Undecaprenyl-diphosphatase (276 aa).

8 consecutive transmembrane segments (helical) span residues 1-21, 39-59, 84-104, 115-135, 159-179, 190-210, 222-242, and 253-273; these read MSWLQVVVLSVLQGLTEFLPV, AGASFTAVCQLGTEAAVLVYF, YWLGWWVIIGTIPISVIGLLF, LWLVATAMIVFSFVIAAAEYA, LALVPGVSRSGATISAGLFLG, FLLAIPAVFASGLFSLPDAFA, QLLVSTVIAFVVGYAAVAWFL, and FVGYRIILGSVVLILLSTGVV.

It belongs to the UppP family.

It localises to the cell membrane. The catalysed reaction is di-trans,octa-cis-undecaprenyl diphosphate + H2O = di-trans,octa-cis-undecaprenyl phosphate + phosphate + H(+). Its function is as follows. Catalyzes the dephosphorylation of undecaprenyl diphosphate (UPP). Confers resistance to bacitracin. The chain is Undecaprenyl-diphosphatase from Mycolicibacterium gilvum (strain PYR-GCK) (Mycobacterium gilvum (strain PYR-GCK)).